The sequence spans 503 residues: Lysine--tRNA ligase (503 aa).

Residues Glu414 and Glu421 each contribute to the Mg(2+) site.

Belongs to the class-II aminoacyl-tRNA synthetase family. In terms of assembly, homodimer. Requires Mg(2+) as cofactor.

It localises to the cytoplasm. It catalyses the reaction tRNA(Lys) + L-lysine + ATP = L-lysyl-tRNA(Lys) + AMP + diphosphate. The protein is Lysine--tRNA ligase of Neisseria gonorrhoeae (strain NCCP11945).